An 827-amino-acid chain; its full sequence is Leucine--tRNA ligase (827 aa).

The 'HIGH' region motif lies at 42–52 (PYPSGNLHMGH). The short motif at 583-587 (KMSKS) is the 'KMSKS' region element. An ATP-binding site is contributed by Lys-586.

This sequence belongs to the class-I aminoacyl-tRNA synthetase family.

Its subcellular location is the cytoplasm. The enzyme catalyses tRNA(Leu) + L-leucine + ATP = L-leucyl-tRNA(Leu) + AMP + diphosphate. The chain is Leucine--tRNA ligase from Desulfitobacterium hafniense (strain DSM 10664 / DCB-2).